A 478-amino-acid chain; its full sequence is Bifunctional protein HldE (478 aa).

Residues 1-318 form a ribokinase region; that stretch reads MKVTLPDFRQ…ENAIRGRADT (318 aa). ATP is bound at residue 195–198; the sequence is NLSE. Residue aspartate 264 is part of the active site. Residues 344–478 form a cytidylyltransferase region; sequence MTNGCFDILH…NTIKANASKS (135 aa).

It in the N-terminal section; belongs to the carbohydrate kinase PfkB family. This sequence in the C-terminal section; belongs to the cytidylyltransferase family. In terms of assembly, homodimer.

It catalyses the reaction D-glycero-beta-D-manno-heptose 7-phosphate + ATP = D-glycero-beta-D-manno-heptose 1,7-bisphosphate + ADP + H(+). The catalysed reaction is D-glycero-beta-D-manno-heptose 1-phosphate + ATP + H(+) = ADP-D-glycero-beta-D-manno-heptose + diphosphate. It participates in nucleotide-sugar biosynthesis; ADP-L-glycero-beta-D-manno-heptose biosynthesis; ADP-L-glycero-beta-D-manno-heptose from D-glycero-beta-D-manno-heptose 7-phosphate: step 1/4. Its pathway is nucleotide-sugar biosynthesis; ADP-L-glycero-beta-D-manno-heptose biosynthesis; ADP-L-glycero-beta-D-manno-heptose from D-glycero-beta-D-manno-heptose 7-phosphate: step 3/4. Catalyzes the phosphorylation of D-glycero-D-manno-heptose 7-phosphate at the C-1 position to selectively form D-glycero-beta-D-manno-heptose-1,7-bisphosphate. Functionally, catalyzes the ADP transfer from ATP to D-glycero-beta-D-manno-heptose 1-phosphate, yielding ADP-D-glycero-beta-D-manno-heptose. This chain is Bifunctional protein HldE, found in Pectobacterium carotovorum subsp. carotovorum (strain PC1).